Here is a 608-residue protein sequence, read N- to C-terminus: Putative pentatricopeptide repeat-containing protein At1g16830 (608 aa).

PPR repeat units follow at residues lysine 107–proline 141, asparagine 142–arginine 172, asparagine 173–proline 210, asparagine 211–valine 245, serine 246–proline 280, asparagine 281–proline 315, aspartate 316–proline 350, aspartate 351–aspartate 381, aspartate 383–leucine 417, aspartate 418–leucine 452, aspartate 453–leucine 487, aspartate 488–proline 522, and asparagine 523–leucine 557.

Belongs to the PPR family. P subfamily.

The protein is Putative pentatricopeptide repeat-containing protein At1g16830 of Arabidopsis thaliana (Mouse-ear cress).